A 344-amino-acid polypeptide reads, in one-letter code: Lipase chaperone (344 aa).

The chain crosses the membrane as a helical span at residues 14-34 (VAVYGAVGLAAIAGVAIWSGA). Positions 45 to 57 (LSADAAARDGASA) are enriched in low complexity. Positions 45–78 (LSADAAARDGASAAPPPPARPASAGMPSPLAGSS) are disordered.

Belongs to the lipase chaperone family.

The protein localises to the cell inner membrane. May be involved in the folding of the extracellular lipase during its passage through the periplasm. This is Lipase chaperone from Burkholderia ambifaria (strain ATCC BAA-244 / DSM 16087 / CCUG 44356 / LMG 19182 / AMMD) (Burkholderia cepacia (strain AMMD)).